A 341-amino-acid polypeptide reads, in one-letter code: Flagellar P-ring protein (341 aa).

The signal sequence occupies residues 1 to 19 (MKQVFLWLIFVLAFHKLLA).

The protein belongs to the FlgI family. The basal body constitutes a major portion of the flagellar organelle and consists of four rings (L,P,S, and M) mounted on a central rod.

It is found in the periplasm. The protein resides in the bacterial flagellum basal body. Assembles around the rod to form the L-ring and probably protects the motor/basal body from shearing forces during rotation. The chain is Flagellar P-ring protein from Helicobacter acinonychis (strain Sheeba).